A 97-amino-acid polypeptide reads, in one-letter code: Co-chaperonin GroES (97 aa).

It belongs to the GroES chaperonin family. As to quaternary structure, heptamer of 7 subunits arranged in a ring. Interacts with the chaperonin GroEL.

The protein resides in the cytoplasm. Functionally, together with the chaperonin GroEL, plays an essential role in assisting protein folding. The GroEL-GroES system forms a nano-cage that allows encapsulation of the non-native substrate proteins and provides a physical environment optimized to promote and accelerate protein folding. GroES binds to the apical surface of the GroEL ring, thereby capping the opening of the GroEL channel. This is Co-chaperonin GroES from Oleispira antarctica.